A 296-amino-acid chain; its full sequence is MQDRFIKCIAELPKPLSDALVPMLNAEFAGHIDAQQLSTLITKSGLAESELLIALLPVAAALARPPISEFYVGAIAKGKSGDIYMGANMELSGEALFHSVHAEQSAISHAWLSGERQIEDVIVNFSPCGHCRQFMNELVEGQKVKIHLPEQQTQPLSHYLPYAFGPSDLNITEPLLTKQQHELSLDSSDPMIIEALDHASLSYAPYTNSYAAVVLETQDGATYCGRYAENAAFNPSMLPMQMALSTMARHNREFCEISRAVLIESAGGKISLVGATMDALHAVAAVELEHIVLDPE.

CMP/dCMP-type deaminase domains are found at residues 47–167 (AESE…FGPS) and 186–296 (DSSD…LDPE). A substrate-binding site is contributed by 88-90 (NME). His101 is a Zn(2+) binding site. The active-site Proton donor is Glu103. 2 residues coordinate Zn(2+): Cys128 and Cys131.

The protein belongs to the cytidine and deoxycytidylate deaminase family. In terms of assembly, homodimer. Zn(2+) serves as cofactor.

The catalysed reaction is cytidine + H2O + H(+) = uridine + NH4(+). It carries out the reaction 2'-deoxycytidine + H2O + H(+) = 2'-deoxyuridine + NH4(+). In terms of biological role, this enzyme scavenges exogenous and endogenous cytidine and 2'-deoxycytidine for UMP synthesis. This Shewanella sediminis (strain HAW-EB3) protein is Cytidine deaminase.